The primary structure comprises 432 residues: Adenylosuccinate synthetase (432 aa).

Residues Gly13–Lys19 and Gly41–Thr43 contribute to the GTP site. Asp14 functions as the Proton acceptor in the catalytic mechanism. The Mg(2+) site is built by Asp14 and Gly41. Residues Asp14–Lys17, Asn39–His42, Thr130, Arg144, Gln225, Thr240, and Arg304 contribute to the IMP site. The active-site Proton donor is the His42. Substrate is bound at residue Ala300–Arg306. Residues Arg306, Lys332–Asp334, and Ser415–Gly417 contribute to the GTP site.

The protein belongs to the adenylosuccinate synthetase family. In terms of assembly, homodimer. It depends on Mg(2+) as a cofactor.

It is found in the cytoplasm. The enzyme catalyses IMP + L-aspartate + GTP = N(6)-(1,2-dicarboxyethyl)-AMP + GDP + phosphate + 2 H(+). It participates in purine metabolism; AMP biosynthesis via de novo pathway; AMP from IMP: step 1/2. Plays an important role in the de novo pathway of purine nucleotide biosynthesis. Catalyzes the first committed step in the biosynthesis of AMP from IMP. The chain is Adenylosuccinate synthetase from Haemophilus influenzae (strain 86-028NP).